The sequence spans 377 residues: tRNA(Met) cytidine acetate ligase (377 aa).

Residues 7 to 20 (ITEYNPFHNGHLFH), Gly-100, Asn-153, and Arg-178 each bind ATP.

Belongs to the TmcAL family.

It localises to the cytoplasm. The catalysed reaction is cytidine(34) in elongator tRNA(Met) + acetate + ATP = N(4)-acetylcytidine(34) in elongator tRNA(Met) + AMP + diphosphate. Functionally, catalyzes the formation of N(4)-acetylcytidine (ac(4)C) at the wobble position of elongator tRNA(Met), using acetate and ATP as substrates. First activates an acetate ion to form acetyladenylate (Ac-AMP) and then transfers the acetyl group to tRNA to form ac(4)C34. This chain is tRNA(Met) cytidine acetate ligase, found in Staphylococcus epidermidis (strain ATCC 12228 / FDA PCI 1200).